Reading from the N-terminus, the 857-residue chain is MASKRGSNQDESIFRIPPYYYIHVLDHNDNVTKVVVGPKTYIRQDHERVIFGPEKMITIPPRHYCIIENPVVRNDTDQVVYDNLGQVKLFHADQEIRLAREPFPLYPGEVLKQAVTALKVVQANAALRLRAILDFEDGTQKRVAGDEWLFEGPGTYIPRKEVVVDETIRATIIRPNQAIKLRARKETNDREGTARVTGEEWQVKKVGAYLPGAYEEVVDTVNAYVLTEKNALHLRATRTFVDMKGKTRKNGEEWLINMADTDAHIPDVYEEVVGVVDINTLTNRQYCVIVDPVGPDGKPQLGQKKLVKGEVSFFLQPGETLEQGIQSVFILGEDEGLILRAQESFKDANAAGAVRQPGDRWMIRGPCEYVPTVELEVVTRRKAIPLDENEGVYIRDTKTGKVRAVTGETYMLSQDEELWAKELSPAVEELLQSAKDPVAERSDRRGDRAAPRAREKTRVISFRVPHNAAVQIYDYKEKKARVVFGPELVMLGPDEQFTQLSLSGGKPKRPNVIKALCLLLGPDFCTDIITIETADHARLQLQLSYNWHFDVPDKTDVAASAKLFSVPDFIGDACKAIASRIRGAVAGVQFDDFHKNSAKIIRASVFGFDEKNKVRERFLFPQNSLVITSIDIQSVEPVDQRTRDALQKSVQLAIEITTNSQEATARHEAERLEQEARGRLERQKIMDEAEAEKSRKELLELQANSAAVESTGQAKAEAQSRAEAARIEGEAAVDQARLKAEAAKIESESELQRLTNAREAETKYVREQNALEVNKTKQMSDIETERFRNMVQSIGADTIKAMAMAGPEMQVKLLSSLGLKSTLITDGSTPINLFNTAQGLLGGFSAKRGIEHVEEED.

8 MVP repeats span residues 18–60 (PYYY…ITIP), 62–122 (RHYC…KVVQ), 123–174 (ANAA…TIIR), 175–227 (PNQA…YVLT), 228–282 (EKNA…NTLT), 284–332 (RQYC…FILG), 333–387 (EDEG…IPLD), and 388–441 (ENEG…VAER). The tract at residues 434 to 453 (AKDPVAERSDRRGDRAAPRA) is disordered. The segment covering 437 to 453 (PVAERSDRRGDRAAPRA) has biased composition (basic and acidic residues). The 30-residue stretch at 665 to 694 (ARHEAERLEQEARGRLERQKIMDEAEAEKS) folds into the IQ domain.

In terms of assembly, the vault ribonucleoprotein particle is a huge (400 A x 670 A) cage structure of 12.9 MDa. It consists of a dimer of half-vaults, with each half-vault comprising 39 identical major vault protein (MVP) chains, PARP4 and one or more vault RNAs (vRNAs). Expressed in embryos, tube feet and coelomocytes (at protein level). Not expressed in sperm cells (at protein level).

The protein resides in the cytoplasm. The protein localises to the nucleus. In terms of biological role, required for normal vault structure. Vaults are multi-subunit structures that may act as scaffolds for proteins involved in signal transduction. Vaults may also play a role in nucleo-cytoplasmic transport. In Strongylocentrotus purpuratus (Purple sea urchin), this protein is Major vault protein.